The following is a 99-amino-acid chain: Large ribosomal subunit protein bL21 (99 aa).

The protein belongs to the bacterial ribosomal protein bL21 family. As to quaternary structure, part of the 50S ribosomal subunit. Contacts protein L20.

Its function is as follows. This protein binds to 23S rRNA in the presence of protein L20. The protein is Large ribosomal subunit protein bL21 of Mesomycoplasma hyopneumoniae (strain 232) (Mycoplasma hyopneumoniae).